A 354-amino-acid polypeptide reads, in one-letter code: Thiamine thiazole synthase (354 aa).

Residues Ala83, 104-105 (EA), Gly112, and Val177 each bind substrate. At Cys210 the chain carries 2,3-didehydroalanine (Cys). Substrate contacts are provided by residues Asp212, His227, Met305, and 315–317 (RMG).

Belongs to the THI4 family. In terms of assembly, homooctamer. Fe cation serves as cofactor. During the catalytic reaction, a sulfide is transferred from Cys-210 to a reaction intermediate, generating a dehydroalanine residue.

It localises to the cytoplasm. Its subcellular location is the nucleus. The catalysed reaction is [ADP-thiazole synthase]-L-cysteine + glycine + NAD(+) = [ADP-thiazole synthase]-dehydroalanine + ADP-5-ethyl-4-methylthiazole-2-carboxylate + nicotinamide + 3 H2O + 2 H(+). Functionally, involved in biosynthesis of the thiamine precursor thiazole. Catalyzes the conversion of NAD and glycine to adenosine diphosphate 5-(2-hydroxyethyl)-4-methylthiazole-2-carboxylic acid (ADT), an adenylated thiazole intermediate. The reaction includes an iron-dependent sulfide transfer from a conserved cysteine residue of the protein to a thiazole intermediate. The enzyme can only undergo a single turnover, which suggests it is a suicide enzyme. May have additional roles in adaptation to various stress conditions and in DNA damage tolerance. In Candida albicans (strain SC5314 / ATCC MYA-2876) (Yeast), this protein is Thiamine thiazole synthase.